We begin with the raw amino-acid sequence, 125 residues long: Aspartate 1-decarboxylase (125 aa).

Ser-25 functions as the Schiff-base intermediate with substrate; via pyruvic acid in the catalytic mechanism. Pyruvic acid (Ser) is present on Ser-25. Thr-57 is a binding site for substrate. The Proton donor role is filled by Tyr-58. 73–75 is a binding site for substrate; it reads GAA.

This sequence belongs to the PanD family. In terms of assembly, heterooctamer of four alpha and four beta subunits. Pyruvate serves as cofactor. Post-translationally, is synthesized initially as an inactive proenzyme, which is activated by self-cleavage at a specific serine bond to produce a beta-subunit with a hydroxyl group at its C-terminus and an alpha-subunit with a pyruvoyl group at its N-terminus.

Its subcellular location is the cytoplasm. The enzyme catalyses L-aspartate + H(+) = beta-alanine + CO2. It participates in cofactor biosynthesis; (R)-pantothenate biosynthesis; beta-alanine from L-aspartate: step 1/1. In terms of biological role, catalyzes the pyruvoyl-dependent decarboxylation of aspartate to produce beta-alanine. The protein is Aspartate 1-decarboxylase of Herpetosiphon aurantiacus (strain ATCC 23779 / DSM 785 / 114-95).